Consider the following 293-residue polypeptide: Outer membrane protein assembly factor BamD (293 aa).

The signal sequence occupies residues 1–26 (MIQRPTFFSPIHLLAVLLATFILITG). Residue C27 is the site of N-palmitoyl cysteine attachment. Residue C27 is the site of S-diacylglycerol cysteine attachment.

The protein belongs to the BamD family. As to quaternary structure, part of the Bam complex.

The protein localises to the cell outer membrane. Functionally, part of the outer membrane protein assembly complex, which is involved in assembly and insertion of beta-barrel proteins into the outer membrane. The sequence is that of Outer membrane protein assembly factor BamD from Xylella fastidiosa (strain Temecula1 / ATCC 700964).